A 130-amino-acid chain; its full sequence is uncharacterized protein (130 aa).

This is an uncharacterized protein from Citrus leprosis virus C (isolate Citrus sinesis/Brazil/Cordeiropolis/2003) (CiLV-C).